Consider the following 431-residue polypeptide: Polygalacturonase ADPG1 (431 aa).

An N-terminal signal peptide occupies residues 1-23 (MARCCRHLAVFLCVLLMLSLCKA). PbH1 repeat units lie at residues 223-249 (CNKV…HITN) and 250-271 (TQNI…SIED). Asp-264 (proton donor) is an active-site residue. His-287 is an active-site residue. 3 PbH1 repeats span residues 303-324 (VSGI…RIKT), 332-353 (AKNI…IIDQ), and 398-420 (CQGI…NANV).

It belongs to the glycosyl hydrolase 28 family. Expressed in flower buds and siliques, in the dehiscence zone of anthers (stomium cells) and maturing siliques. Expressed in stigma during pollen tube growth. Not expressed in seeds or in the floral part or leaf abscission zone but found at the junction between the seed and the funiculus at the site of seed abscission.

It is found in the secreted. The protein localises to the cell wall. Its subcellular location is the cytoplasm. It carries out the reaction (1,4-alpha-D-galacturonosyl)n+m + H2O = (1,4-alpha-D-galacturonosyl)n + (1,4-alpha-D-galacturonosyl)m.. Functionally, polygalacturonase involved in cell separation in the final stages of pod shatter and in anther dehiscence. Not involved in floral organ abscission. This Arabidopsis thaliana (Mouse-ear cress) protein is Polygalacturonase ADPG1 (ADPG1).